The chain runs to 159 residues: 2-C-methyl-D-erythritol 2,4-cyclodiphosphate synthase (159 aa).

Aspartate 8 and histidine 10 together coordinate a divalent metal cation. 4-CDP-2-C-methyl-D-erythritol 2-phosphate-binding positions include 8–10 (DVH) and 34–35 (HS). Histidine 42 lines the a divalent metal cation pocket. 4-CDP-2-C-methyl-D-erythritol 2-phosphate contacts are provided by residues 56-58 (DIG), 61-65 (FPDTD), 100-106 (AQAPKML), 132-135 (TTTE), phenylalanine 139, and arginine 142.

Belongs to the IspF family. As to quaternary structure, homotrimer. Requires a divalent metal cation as cofactor.

It carries out the reaction 4-CDP-2-C-methyl-D-erythritol 2-phosphate = 2-C-methyl-D-erythritol 2,4-cyclic diphosphate + CMP. The protein operates within isoprenoid biosynthesis; isopentenyl diphosphate biosynthesis via DXP pathway; isopentenyl diphosphate from 1-deoxy-D-xylulose 5-phosphate: step 4/6. Involved in the biosynthesis of isopentenyl diphosphate (IPP) and dimethylallyl diphosphate (DMAPP), two major building blocks of isoprenoid compounds. Catalyzes the conversion of 4-diphosphocytidyl-2-C-methyl-D-erythritol 2-phosphate (CDP-ME2P) to 2-C-methyl-D-erythritol 2,4-cyclodiphosphate (ME-CPP) with a corresponding release of cytidine 5-monophosphate (CMP). This chain is 2-C-methyl-D-erythritol 2,4-cyclodiphosphate synthase, found in Klebsiella pneumoniae subsp. pneumoniae (strain ATCC 700721 / MGH 78578).